The chain runs to 653 residues: UvrABC system protein C (653 aa).

One can recognise a GIY-YIG domain in the interval asparagine 44–valine 122. In terms of domain architecture, UVR spans serine 232–valine 267.

The protein belongs to the UvrC family. Interacts with UvrB in an incision complex.

It is found in the cytoplasm. The UvrABC repair system catalyzes the recognition and processing of DNA lesions. UvrC both incises the 5' and 3' sides of the lesion. The N-terminal half is responsible for the 3' incision and the C-terminal half is responsible for the 5' incision. The protein is UvrABC system protein C of Chelativorans sp. (strain BNC1).